We begin with the raw amino-acid sequence, 159 residues long: Large ribosomal subunit protein mL43 (159 aa).

A disordered region spans residues 123 to 159; sequence SPSIQGQWHPFTNKPTALGGLRPREVQNPAPTQRPAQ.

The protein belongs to the mitochondrion-specific ribosomal protein mL43 family. In terms of assembly, component of the mitochondrial ribosome large subunit (39S) which comprises a 16S rRNA and about 50 distinct proteins.

Its subcellular location is the mitochondrion. The chain is Large ribosomal subunit protein mL43 (MRPL43) from Bos taurus (Bovine).